We begin with the raw amino-acid sequence, 203 residues long: Outer-membrane lipoprotein carrier protein (203 aa).

The first 21 residues, 1–21 (MKKLLVACCLLSGFASTSVLA), serve as a signal peptide directing secretion.

This sequence belongs to the LolA family. Monomer.

The protein resides in the periplasm. In terms of biological role, participates in the translocation of lipoproteins from the inner membrane to the outer membrane. Only forms a complex with a lipoprotein if the residue after the N-terminal Cys is not an aspartate (The Asp acts as a targeting signal to indicate that the lipoprotein should stay in the inner membrane). In Serratia proteamaculans (strain 568), this protein is Outer-membrane lipoprotein carrier protein.